The following is a 92-amino-acid chain: RIIa domain-containing protein 1 (92 aa).

The region spanning 43 to 77 (KEVELLISGFFREMFLKRPDNIPEFAADYFTDPRL) is the RIIa domain.

The sequence is that of RIIa domain-containing protein 1 (RIIAD1) from Bos taurus (Bovine).